Consider the following 117-residue polypeptide: Minor capsid protein p17 (117 aa).

Asn12 carries an N-linked (GlcNAc...) asparagine; by host glycan. Residues 39-59 (AILLGILILLVIILIIVAIVY) traverse the membrane as a helical segment. N-linked (GlcNAc...) asparagine; by host glycosylation is found at Asn61 and Asn97.

It belongs to the asfivirus minor capsid protein p17 family. In terms of assembly, interacts with the minor capsid protein M1249L and with the hexon capsid protein p72 capsomers; these interactions form a rigid zipper structure that stabilizes the capsomers. Interacts with host STING1.

It localises to the virion membrane. It is found in the host endoplasmic reticulum membrane. Its subcellular location is the host Golgi apparatus membrane. Its function is as follows. Together with the penton and the other minor capsid proteins (M1249L, p49), forms a complicated network immediately below the outer capsid shell, stabilizing the whole capsid. Three copies of p17 encircle each p72 capsomer in the inner capsid shell, anchoring p72 capsomers on the inner membrane. Required for the assembly of the capsid and icosahedral morphogenesis. Additionally, inhibits the host cGAS-STING pathway through its interaction with STING1 and subsequent interference of the recruitment of downstream components TBK1 and IKBKE. This African swine fever virus (strain Badajoz 1971 Vero-adapted) (Ba71V) protein is Minor capsid protein p17.